We begin with the raw amino-acid sequence, 292 residues long: 4-hydroxy-tetrahydrodipicolinate synthase (292 aa).

Position 45 (Thr45) interacts with pyruvate. The active-site Proton donor/acceptor is Tyr133. Lys161 serves as the catalytic Schiff-base intermediate with substrate. Ile203 is a pyruvate binding site.

This sequence belongs to the DapA family. Homodimer.

Its subcellular location is the cytoplasm. The enzyme catalyses L-aspartate 4-semialdehyde + pyruvate = (2S,4S)-4-hydroxy-2,3,4,5-tetrahydrodipicolinate + H2O + H(+). It participates in amino-acid biosynthesis; L-lysine biosynthesis via DAP pathway; (S)-tetrahydrodipicolinate from L-aspartate: step 3/4. Catalyzes the condensation of (S)-aspartate-beta-semialdehyde [(S)-ASA] and pyruvate to 4-hydroxy-tetrahydrodipicolinate (HTPA). This is 4-hydroxy-tetrahydrodipicolinate synthase from Ectopseudomonas mendocina (strain ymp) (Pseudomonas mendocina).